The following is a 529-amino-acid chain: 1,4-beta-D-glucan cellobiohydrolase xynA (529 aa).

The N-terminal stretch at 1–25 (MSALNSFNMYKSALILGSLLATAGA) is a signal peptide. The tract at residues 26–456 (QQIGTYTAET…SDIKVGPFNS (431 aa)) is catalytic. N-linked (GlcNAc...) asparagine glycans are attached at residues asparagine 70 and asparagine 219. Glutamate 234 acts as the Nucleophile in catalysis. Glutamate 239 (proton donor) is an active-site residue. A glycan (N-linked (GlcNAc...) asparagine) is linked at asparagine 413. The interval 413–438 (NETGTPGAARGSCPTTSGNPKTVESQ) is disordered. Over residues 425-438 (CPTTSGNPKTVESQ) the composition is skewed to polar residues. Asparagine 455 is a glycosylation site (N-linked (GlcNAc...) asparagine). Residues 457–493 (TFSGGTSTGGSTTTTASGTTSTKASTTSTSSTSTGTG) are thr-rich linker. The interval 460-491 (GGTSTGGSTTTTASGTTSTKASTTSTSSTSTG) is disordered. Residues 493 to 529 (GVAAHWGQCGGQGWTGPTTCASGTTCTVVNPYYSQCL) enclose the CBM1 domain. Disulfide bonds link cysteine 501-cysteine 518 and cysteine 512-cysteine 528.

This sequence belongs to the glycosyl hydrolase 7 (cellulase C) family.

Its subcellular location is the secreted. It carries out the reaction Hydrolysis of (1-&gt;4)-beta-D-glucosidic linkages in cellulose and cellotetraose, releasing cellobiose from the non-reducing ends of the chains.. Its activity is regulated as follows. Cellobiose inhibits xynA at high concentrations. In terms of biological role, the biological conversion of cellulose to glucose generally requires three types of hydrolytic enzymes: (1) Endoglucanases which cut internal beta-1,4-glucosidic bonds; (2) Exocellobiohydrolases that cut the disaccharide cellobiose from the non-reducing end of the cellulose polymer chain; (3) Beta-1,4-glucosidases which hydrolyze the cellobiose and other short cello-oligosaccharides to glucose. This chain is 1,4-beta-D-glucan cellobiohydrolase xynA (xynA), found in Talaromyces funiculosus (Fruitlet core rot fungus).